The primary structure comprises 315 residues: Tyrosine recombinase XerC (315 aa).

The Core-binding (CB) domain maps to 13 to 104 (ADLAAAREEW…GVRSLLRHLE (92 aa)). Residues 125-309 (SLPKPLTADD…DTQRLLEVYD (185 aa)) enclose the Tyr recombinase domain. Residues arginine 168, lysine 193, histidine 261, arginine 264, and histidine 287 contribute to the active site. Residue tyrosine 296 is the O-(3'-phospho-DNA)-tyrosine intermediate of the active site.

Belongs to the 'phage' integrase family. XerC subfamily. In terms of assembly, forms a cyclic heterotetrameric complex composed of two molecules of XerC and two molecules of XerD.

The protein resides in the cytoplasm. Its function is as follows. Site-specific tyrosine recombinase, which acts by catalyzing the cutting and rejoining of the recombining DNA molecules. The XerC-XerD complex is essential to convert dimers of the bacterial chromosome into monomers to permit their segregation at cell division. It also contributes to the segregational stability of plasmids. The sequence is that of Tyrosine recombinase XerC from Brucella suis biovar 1 (strain 1330).